A 556-amino-acid polypeptide reads, in one-letter code: Formate--tetrahydrofolate ligase (556 aa).

An ATP-binding site is contributed by 65 to 72 (TPAGEGKS).

Belongs to the formate--tetrahydrofolate ligase family.

The enzyme catalyses (6S)-5,6,7,8-tetrahydrofolate + formate + ATP = (6R)-10-formyltetrahydrofolate + ADP + phosphate. The protein operates within one-carbon metabolism; tetrahydrofolate interconversion. The chain is Formate--tetrahydrofolate ligase from Streptococcus pneumoniae (strain 70585).